The following is a 390-amino-acid chain: Coenzyme A biosynthesis bifunctional protein CoaBC (390 aa).

Positions 1 to 188 (MDKNKHILIG…NQKDYLKNKK (188 aa)) are phosphopantothenoylcysteine decarboxylase. C156 functions as the Proton donor in the catalytic mechanism. A phosphopantothenate--cysteine ligase region spans residues 189–390 (ILITASRTEE…VAKEILKILY (202 aa)). CTP-binding positions include D277, K287, 304 to 307 (PDII), F323, K338, and K342.

This sequence in the N-terminal section; belongs to the HFCD (homo-oligomeric flavin containing Cys decarboxylase) superfamily. The protein in the C-terminal section; belongs to the PPC synthetase family. Mg(2+) is required as a cofactor. It depends on FMN as a cofactor.

It catalyses the reaction N-[(R)-4-phosphopantothenoyl]-L-cysteine + H(+) = (R)-4'-phosphopantetheine + CO2. The catalysed reaction is (R)-4'-phosphopantothenate + L-cysteine + CTP = N-[(R)-4-phosphopantothenoyl]-L-cysteine + CMP + diphosphate + H(+). The protein operates within cofactor biosynthesis; coenzyme A biosynthesis; CoA from (R)-pantothenate: step 2/5. It functions in the pathway cofactor biosynthesis; coenzyme A biosynthesis; CoA from (R)-pantothenate: step 3/5. Catalyzes two sequential steps in the biosynthesis of coenzyme A. In the first step cysteine is conjugated to 4'-phosphopantothenate to form 4-phosphopantothenoylcysteine. In the second step the latter compound is decarboxylated to form 4'-phosphopantotheine. In Borreliella burgdorferi (strain ATCC 35210 / DSM 4680 / CIP 102532 / B31) (Borrelia burgdorferi), this protein is Coenzyme A biosynthesis bifunctional protein CoaBC.